A 127-amino-acid polypeptide reads, in one-letter code: Phosphoribosyl-AMP cyclohydrolase (127 aa).

Asp75 provides a ligand contact to Mg(2+). Residue Cys76 participates in Zn(2+) binding. Mg(2+) contacts are provided by Asp77 and Asp79. The Zn(2+) site is built by Cys93 and Cys100.

This sequence belongs to the PRA-CH family. In terms of assembly, homodimer. Mg(2+) is required as a cofactor. The cofactor is Zn(2+).

It is found in the cytoplasm. It catalyses the reaction 1-(5-phospho-beta-D-ribosyl)-5'-AMP + H2O = 1-(5-phospho-beta-D-ribosyl)-5-[(5-phospho-beta-D-ribosylamino)methylideneamino]imidazole-4-carboxamide. It participates in amino-acid biosynthesis; L-histidine biosynthesis; L-histidine from 5-phospho-alpha-D-ribose 1-diphosphate: step 3/9. Its function is as follows. Catalyzes the hydrolysis of the adenine ring of phosphoribosyl-AMP. The chain is Phosphoribosyl-AMP cyclohydrolase from Desulfotalea psychrophila (strain LSv54 / DSM 12343).